Consider the following 302-residue polypeptide: Phytoene synthase (302 aa).

Belongs to the phytoene/squalene synthase family. ATP is required as a cofactor. Requires Mn(2+) as cofactor. Mg(2+) serves as cofactor.

It functions in the pathway carotenoid biosynthesis; phytoene biosynthesis. Its function is as follows. Involved in the biosynthesis of carotenoids. Catalyzes the condensation of two molecules of geranylgeranyl diphosphate (GGPP) to give prephytoene diphosphate (PPPP) and the subsequent rearrangement of the cyclopropylcarbinyl intermediate to yield phytoene. The protein is Phytoene synthase (crtB) of Mycobacterium bovis (strain ATCC BAA-935 / AF2122/97).